Reading from the N-terminus, the 108-residue chain is Tubulin-specific chaperone A (108 aa).

Ala2 carries the N-acetylalanine modification.

Belongs to the TBCA family. Supercomplex made of cofactors A to E. Cofactors A and D function by capturing and stabilizing tubulin in a quasi-native conformation. Cofactor E binds to the cofactor D-tubulin complex; interaction with cofactor C then causes the release of tubulin polypeptides that are committed to the native state.

Its subcellular location is the cytoplasm. The protein localises to the cytoskeleton. Functionally, tubulin-folding protein; involved in the early step of the tubulin folding pathway. The sequence is that of Tubulin-specific chaperone A (TBCA) from Gallus gallus (Chicken).